Here is a 212-residue protein sequence, read N- to C-terminus: Outer-membrane lipoprotein carrier protein (212 aa).

The N-terminal stretch at M1–A25 is a signal peptide.

This sequence belongs to the LolA family. In terms of assembly, monomer.

It is found in the periplasm. Functionally, participates in the translocation of lipoproteins from the inner membrane to the outer membrane. Only forms a complex with a lipoprotein if the residue after the N-terminal Cys is not an aspartate (The Asp acts as a targeting signal to indicate that the lipoprotein should stay in the inner membrane). The protein is Outer-membrane lipoprotein carrier protein of Cupriavidus pinatubonensis (strain JMP 134 / LMG 1197) (Cupriavidus necator (strain JMP 134)).